Consider the following 633-residue polypeptide: Proline-rich protein LAS17 (633 aa).

In terms of domain architecture, WH1 spans 16–127 (LPKASNKIID…KRVQKRERYA (112 aa)). Disordered regions lie at residues 145-545 (REEQ…TTGD) and 563-606 (ALRK…PASL). Residues 192–215 (AETFDSDQTSSFSDINSTTASAPT) are compositionally biased toward low complexity. 2 stretches are compositionally biased toward pro residues: residues 216 to 225 (TPAPALPPAS) and 238 to 256 (SLPPLPNQFAPLPDPPQHN). Low complexity-rich tracts occupy residues 257-269 (SPPQNNAPSQPQS) and 307-322 (PQQNRPLPQLPNRNNR). Threonine 334 is subject to Phosphothreonine. Serine 337 carries the post-translational modification Phosphoserine. The span at 342-357 (PAPPPPPRRGPAPPPP) shows a compositional bias: pro residues. Composition is skewed to polar residues over residues 363–376 (TSNTLNSAGGNSLL), 399–414 (NVTMQQNPQQYNNSNR), and 454–465 (PQNTQAPSQATN). Residues 479-488 (QSQIPQSAPS) show a composition bias toward low complexity. In terms of domain architecture, WH2 spans 547 to 567 (GRDALLASIRGAGGIGALRKV). Position 588 is a phosphoserine (serine 588).

Interacts with KRE6, LSB3, LSB5 and YSC84.

This Saccharomyces cerevisiae (strain ATCC 204508 / S288c) (Baker's yeast) protein is Proline-rich protein LAS17 (LAS17).